Here is a 238-residue protein sequence, read N- to C-terminus: Orotidine 5'-phosphate decarboxylase (238 aa).

Residues Asp10, Lys32, 59 to 68 (DLKLHDIPNT), Thr122, Arg184, Gln193, Gly213, and Arg214 each bind substrate. Lys61 acts as the Proton donor in catalysis.

This sequence belongs to the OMP decarboxylase family. Type 1 subfamily. Homodimer.

It carries out the reaction orotidine 5'-phosphate + H(+) = UMP + CO2. It participates in pyrimidine metabolism; UMP biosynthesis via de novo pathway; UMP from orotate: step 2/2. Its function is as follows. Catalyzes the decarboxylation of orotidine 5'-monophosphate (OMP) to uridine 5'-monophosphate (UMP). The polypeptide is Orotidine 5'-phosphate decarboxylase (Bacillus cereus (strain ATCC 10987 / NRS 248)).